Here is a 56-residue protein sequence, read N- to C-terminus: Small ribosomal subunit protein uS14 (56 aa).

Zn(2+)-binding residues include Cys21, Cys24, Cys39, and Cys42.

The protein belongs to the universal ribosomal protein uS14 family. As to quaternary structure, component of the 40S small ribosomal subunit. The cofactor is Zn(2+).

The protein localises to the cytoplasm. The protein resides in the cytosol. It is found in the rough endoplasmic reticulum. This chain is Small ribosomal subunit protein uS14 (RpS29), found in Scarabaeus laticollis (Scarab dung beetle).